We begin with the raw amino-acid sequence, 192 residues long: Aminodeoxychorismate synthase component 2 (192 aa).

The 190-residue stretch at S3–H192 folds into the Glutamine amidotransferase type-1 domain. Active-site residues include C83, H170, and E172.

As to quaternary structure, monomer. Heterodimer consisting of two non-identical subunits: a glutamine amidotransferase subunit (PabA) and a aminodeoxychorismate synthase subunit (PabB).

It catalyses the reaction chorismate + L-glutamine = 4-amino-4-deoxychorismate + L-glutamate. Its pathway is cofactor biosynthesis; tetrahydrofolate biosynthesis; 4-aminobenzoate from chorismate: step 1/2. In terms of biological role, part of a heterodimeric complex that catalyzes the two-step biosynthesis of 4-amino-4-deoxychorismate (ADC), a precursor of p-aminobenzoate (PABA) and tetrahydrofolate. In the first step, a glutamine amidotransferase (PabA) generates ammonia as a substrate that, along with chorismate, is used in the second step, catalyzed by aminodeoxychorismate synthase (PabB) to produce ADC. PabA converts glutamine into glutamate only in the presence of stoichiometric amounts of PabB. The polypeptide is Aminodeoxychorismate synthase component 2 (Streptomyces lividans).